Here is a 525-residue protein sequence, read N- to C-terminus: Probable pectinesterase/pectinesterase inhibitor 44 (525 aa).

An N-terminal signal peptide occupies residues 1 to 19 (MSCLKYFLILLMLGLCVSS). Positions 30-153 (VPASEFVSSI…YSMLRELLPL (124 aa)) are pectinesterase inhibitor 44. A glycan (N-linked (GlcNAc...) asparagine) is linked at Asn98. The segment at 157-192 (EQKPKAVSKPGPIAKGPKAPPGRKLRDTDEDESLQF) is disordered. Positions 212 to 509 (DVSVALDGTG…FTVSQFIKGN (298 aa)) are pectinesterase 44. N-linked (GlcNAc...) asparagine glycosylation is found at Asn222 and Asn278. Residues Thr287 and Gln317 each coordinate substrate. Residue Asp340 is the Proton donor; for pectinesterase activity of the active site. Cys354 and Cys374 form a disulfide bridge. Asp361 functions as the Nucleophile; for pectinesterase activity in the catalytic mechanism. N-linked (GlcNAc...) asparagine glycans are attached at residues Asn409 and Asn421. Substrate-binding residues include Arg429 and Trp431. 3 N-linked (GlcNAc...) asparagine glycosylation sites follow: Asn443, Asn492, and Asn499.

In the N-terminal section; belongs to the PMEI family. It in the C-terminal section; belongs to the pectinesterase family. Expressed in siliques.

Its subcellular location is the secreted. It localises to the cell wall. It catalyses the reaction [(1-&gt;4)-alpha-D-galacturonosyl methyl ester](n) + n H2O = [(1-&gt;4)-alpha-D-galacturonosyl](n) + n methanol + n H(+). Its pathway is glycan metabolism; pectin degradation; 2-dehydro-3-deoxy-D-gluconate from pectin: step 1/5. In terms of biological role, acts in the modification of cell walls via demethylesterification of cell wall pectin. The sequence is that of Probable pectinesterase/pectinesterase inhibitor 44 (PME44) from Arabidopsis thaliana (Mouse-ear cress).